The sequence spans 395 residues: MSSALSQASPTAPRFSVLSWPQVRRLDAILCESVPIHGRGNFPTLSCRPRDLVQVVRSRLEQKGILVHNVRLNGSAASYVLHHDSGLGYKDLDLIFMVDLKGPDAFQVVKHAVLNCLLDFLPSGVNKEKITPMTLKEAYVQKLVKVCTESDRWSLISLSNNSGKNMELKFVDSLRRQFEFSVDSFQIILDSMLMFSQCSENPMSQSFHPTVTGESMYGDFEEAMDHLRNRIIATRNPEEIRGGGLLKYCNLLVRGFRPKSEVDMKTMQRYMCSRYFIDFPDIREQQRKLKCYLQDHFVGMEDKRYDYLMTLHQVVNESTVCLMGHERRQTLALIASLAVHVLSEQNHPQAVPTFTCYYQPAPYIGEVNYNSYYFTPVQPLMSCSHSYQTWLPCCN.

The protein belongs to the TENT family.

It localises to the cytoplasm. The protein resides in the nucleus. It carries out the reaction RNA(n) + ATP = RNA(n)-3'-adenine ribonucleotide + diphosphate. In terms of biological role, catalyzes the transfer of one adenosine molecule from an ATP to an mRNA poly(A) tail bearing a 3'-OH terminal group in an ATP hydrolysis-dependent manner and participates in cytoplasmic polyadenylation. May be involved in maintaining the translation efficiency of at least some genes through preventing degradation of their mRNAs. The polypeptide is Terminal nucleotidyltransferase 5B (Xenopus tropicalis (Western clawed frog)).